The primary structure comprises 142 residues: Interleukin-3 (142 aa).

A signal peptide spans Met-1–Gln-18. N-linked (GlcNAc...) asparagine glycans are attached at residues Asn-33, Asn-88, and Asn-108. A disulfide bridge links Cys-34 with Cys-102.

The protein belongs to the IL-3 family. As to quaternary structure, monomer. As to expression, activated T-cells, mast cells, natural killer cells.

It is found in the secreted. Its function is as follows. Granulocyte/macrophage colony-stimulating factors are cytokines that act in hematopoiesis by controlling the production, differentiation, and function of 2 related white cell populations of the blood, the granulocytes and the monocytes-macrophages. This CSF induces granulocytes, macrophages, mast cells, stem cells, erythroid cells, eosinophils and megakaryocytes. The protein is Interleukin-3 (IL3) of Saguinus oedipus (Cotton-top tamarin).